The chain runs to 638 residues: 1-deoxy-D-xylulose-5-phosphate synthase (638 aa).

Thiamine diphosphate-binding positions include His-71 and 112–114 (SHA). Mg(2+) is bound at residue Asp-144. Residues 145 to 146 (GA), Asn-173, Tyr-284, and Glu-365 contribute to the thiamine diphosphate site. Position 173 (Asn-173) interacts with Mg(2+).

It belongs to the transketolase family. DXPS subfamily. As to quaternary structure, homodimer. Requires Mg(2+) as cofactor. The cofactor is thiamine diphosphate.

It carries out the reaction D-glyceraldehyde 3-phosphate + pyruvate + H(+) = 1-deoxy-D-xylulose 5-phosphate + CO2. Its pathway is metabolic intermediate biosynthesis; 1-deoxy-D-xylulose 5-phosphate biosynthesis; 1-deoxy-D-xylulose 5-phosphate from D-glyceraldehyde 3-phosphate and pyruvate: step 1/1. Functionally, catalyzes the acyloin condensation reaction between C atoms 2 and 3 of pyruvate and glyceraldehyde 3-phosphate to yield 1-deoxy-D-xylulose-5-phosphate (DXP). The polypeptide is 1-deoxy-D-xylulose-5-phosphate synthase (Mycobacterium sp. (strain JLS)).